The sequence spans 545 residues: CTP synthase (545 aa).

The segment at 1 to 266 (MTHFIFVTGG…DDLICERFGF (266 aa)) is amidoligase domain. A CTP-binding site is contributed by Ser-13. Ser-13 contacts UTP. ATP contacts are provided by residues 14–19 (SLGKGI) and Asp-71. Mg(2+)-binding residues include Asp-71 and Glu-140. CTP contacts are provided by residues 147-149 (DIE), 187-192 (KTKPTQ), and Lys-223. Residues 187-192 (KTKPTQ) and Lys-223 contribute to the UTP site. 239 to 241 (KDA) contacts ATP. The Glutamine amidotransferase type-1 domain maps to 292 to 543 (RVAMVGKYVE…IDAAKTQHQK (252 aa)). Gly-353 contacts L-glutamine. The Nucleophile; for glutamine hydrolysis role is filled by Cys-380. L-glutamine is bound by residues 381 to 384 (LGMQ), Glu-404, and Arg-471. Residues His-516 and Glu-518 contribute to the active site.

This sequence belongs to the CTP synthase family. In terms of assembly, homotetramer.

The catalysed reaction is UTP + L-glutamine + ATP + H2O = CTP + L-glutamate + ADP + phosphate + 2 H(+). It catalyses the reaction L-glutamine + H2O = L-glutamate + NH4(+). The enzyme catalyses UTP + NH4(+) + ATP = CTP + ADP + phosphate + 2 H(+). The protein operates within pyrimidine metabolism; CTP biosynthesis via de novo pathway; CTP from UDP: step 2/2. With respect to regulation, allosterically activated by GTP, when glutamine is the substrate; GTP has no effect on the reaction when ammonia is the substrate. The allosteric effector GTP functions by stabilizing the protein conformation that binds the tetrahedral intermediate(s) formed during glutamine hydrolysis. Inhibited by the product CTP, via allosteric rather than competitive inhibition. In terms of biological role, catalyzes the ATP-dependent amination of UTP to CTP with either L-glutamine or ammonia as the source of nitrogen. Regulates intracellular CTP levels through interactions with the four ribonucleotide triphosphates. This Acinetobacter baumannii (strain ACICU) protein is CTP synthase.